The sequence spans 220 residues: Glutamine amidotransferase-like class 1 domain-containing protein 1 (220 aa).

The signal sequence occupies residues 1–35 (MASERLPSRPACLLVASGAAEGVSAQSFLHCFTLA). 2 N-linked (GlcNAc...) asparagine glycosylation sites follow: Asn57 and Asn201.

Belongs to the peptidase C56 family. In terms of assembly, homotetramer. Component of the FERRY complex composed of five subunits, TBCK, PPP1R21, FERRY3, CRYZL1 and GATD1 with a ratio of 1:2:1:2:4, respectively.

It localises to the secreted. It is found in the early endosome. Its function is as follows. Component of the FERRY complex (Five-subunit Endosomal Rab5 and RNA/ribosome intermediary). The FERRY complex directly interacts with mRNAs and RAB5A, and functions as a RAB5A effector involved in the localization and the distribution of specific mRNAs most likely by mediating their endosomal transport. The complex recruits mRNAs and ribosomes to early endosomes through direct mRNA-interaction. This is Glutamine amidotransferase-like class 1 domain-containing protein 1 from Bos taurus (Bovine).